A 295-amino-acid chain; its full sequence is Ent-pimara-9(11),15-diene synthase (295 aa).

It belongs to the terpene synthase family. As to quaternary structure, monomer. It depends on a divalent metal cation as a cofactor.

The catalysed reaction is ent-copalyl diphosphate = ent-pimara-9(11),15-diene + diphosphate. It functions in the pathway antibiotic biosynthesis. In terms of biological role, involved in viguiepinol biosynthesis. Catalyzes the conversion of copalyl diphosphate (ent-CDP) into pimara-9(11),15-diene (PMD). The protein is Ent-pimara-9(11),15-diene synthase of Streptomyces sp. (strain KO-3988).